The chain runs to 626 residues: Elongation factor 4 (626 aa).

The region spanning 14-195 (SVIRNFCIIA…QIVMDVPAPH (182 aa)) is the tr-type G domain. GTP contacts are provided by residues 26-31 (DHGKST) and 142-145 (NKID). Positions 603 to 626 (LSTGEDSNDRDTKDKIRAAQKTEG) are disordered. Residues 609-626 (SNDRDTKDKIRAAQKTEG) are compositionally biased toward basic and acidic residues.

The protein belongs to the TRAFAC class translation factor GTPase superfamily. Classic translation factor GTPase family. LepA subfamily.

The protein resides in the cell membrane. The enzyme catalyses GTP + H2O = GDP + phosphate + H(+). Its function is as follows. Required for accurate and efficient protein synthesis under certain stress conditions. May act as a fidelity factor of the translation reaction, by catalyzing a one-codon backward translocation of tRNAs on improperly translocated ribosomes. Back-translocation proceeds from a post-translocation (POST) complex to a pre-translocation (PRE) complex, thus giving elongation factor G a second chance to translocate the tRNAs correctly. Binds to ribosomes in a GTP-dependent manner. This chain is Elongation factor 4, found in Bifidobacterium longum (strain DJO10A).